The chain runs to 478 residues: Proline--tRNA ligase (478 aa).

Belongs to the class-II aminoacyl-tRNA synthetase family. ProS type 3 subfamily. Homodimer.

It localises to the cytoplasm. The catalysed reaction is tRNA(Pro) + L-proline + ATP = L-prolyl-tRNA(Pro) + AMP + diphosphate. Its function is as follows. Catalyzes the attachment of proline to tRNA(Pro) in a two-step reaction: proline is first activated by ATP to form Pro-AMP and then transferred to the acceptor end of tRNA(Pro). This chain is Proline--tRNA ligase, found in Ruminiclostridium cellulolyticum (strain ATCC 35319 / DSM 5812 / JCM 6584 / H10) (Clostridium cellulolyticum).